The sequence spans 285 residues: Pantothenate synthetase (285 aa).

30 to 37 (MGNLHDGH) is an ATP binding site. The active-site Proton donor is H37. Position 61 (Q61) interacts with (R)-pantoate. Residue Q61 coordinates beta-alanine. 149 to 152 (GEKD) contributes to the ATP binding site. Residue Q155 coordinates (R)-pantoate. Residues I178 and 186–189 (FSSR) contribute to the ATP site.

The protein belongs to the pantothenate synthetase family. Homodimer.

The protein resides in the cytoplasm. It catalyses the reaction (R)-pantoate + beta-alanine + ATP = (R)-pantothenate + AMP + diphosphate + H(+). Its pathway is cofactor biosynthesis; (R)-pantothenate biosynthesis; (R)-pantothenate from (R)-pantoate and beta-alanine: step 1/1. Its function is as follows. Catalyzes the condensation of pantoate with beta-alanine in an ATP-dependent reaction via a pantoyl-adenylate intermediate. The sequence is that of Pantothenate synthetase from Buchnera aphidicola subsp. Schizaphis graminum (strain Sg).